A 97-amino-acid chain; its full sequence is Type 1 phosphatases regulator YPI2 (97 aa).

The tract at residues 1–97 is disordered; it reads MNKKKTKICC…KMMEKKSNNT (97 aa). The span at 43-53 shows a compositional bias: basic and acidic residues; that stretch reads ENDKDLGFDER. Residues 54–65 show a composition bias toward basic residues; that stretch reads RKRRVERRRRKL.

Belongs to the YPI1 family.

The protein localises to the nucleus. In terms of biological role, regulator of type 1 phosphatases which maintains protein phosphatase activity under strict control. This chain is Type 1 phosphatases regulator YPI2 (YPI2), found in Vanderwaltozyma polyspora (strain ATCC 22028 / DSM 70294 / BCRC 21397 / CBS 2163 / NBRC 10782 / NRRL Y-8283 / UCD 57-17) (Kluyveromyces polysporus).